A 189-amino-acid polypeptide reads, in one-letter code: uncharacterized protein (189 aa).

The protein belongs to the mimivirus R457/R459 family.

It is found in the virion. This is an uncharacterized protein from Acanthamoeba polyphaga mimivirus (APMV).